A 192-amino-acid chain; its full sequence is Thymidine kinase (192 aa).

Residues 9–16 (SSMNAGKS) and 87–90 (DEAQ) contribute to the ATP site. E88 functions as the Proton acceptor in the catalytic mechanism. Positions 145, 147, 182, and 185 each coordinate Zn(2+).

Belongs to the thymidine kinase family. Homotetramer.

The protein resides in the cytoplasm. It catalyses the reaction thymidine + ATP = dTMP + ADP + H(+). This Colwellia psychrerythraea (strain 34H / ATCC BAA-681) (Vibrio psychroerythus) protein is Thymidine kinase.